We begin with the raw amino-acid sequence, 913 residues long: Valine--tRNA ligase (913 aa).

Residues 49 to 59 (PNVTGNLHLGH) carry the 'HIGH' region motif. The short motif at 544-548 (KMSKS) is the 'KMSKS' region element. K547 contributes to the ATP binding site. The stretch at 851–912 (DWVKKQQKRL…ERLEGVLAQL (62 aa)) forms a coiled coil.

It belongs to the class-I aminoacyl-tRNA synthetase family. ValS type 1 subfamily. As to quaternary structure, monomer.

Its subcellular location is the cytoplasm. It carries out the reaction tRNA(Val) + L-valine + ATP = L-valyl-tRNA(Val) + AMP + diphosphate. Its function is as follows. Catalyzes the attachment of valine to tRNA(Val). As ValRS can inadvertently accommodate and process structurally similar amino acids such as threonine, to avoid such errors, it has a 'posttransfer' editing activity that hydrolyzes mischarged Thr-tRNA(Val) in a tRNA-dependent manner. This chain is Valine--tRNA ligase, found in Deinococcus radiodurans (strain ATCC 13939 / DSM 20539 / JCM 16871 / CCUG 27074 / LMG 4051 / NBRC 15346 / NCIMB 9279 / VKM B-1422 / R1).